The chain runs to 126 residues: Holo-[acyl-carrier-protein] synthase (126 aa).

Residues Asp-9 and Glu-58 each contribute to the Mg(2+) site.

The protein belongs to the P-Pant transferase superfamily. AcpS family. It depends on Mg(2+) as a cofactor.

Its subcellular location is the cytoplasm. The enzyme catalyses apo-[ACP] + CoA = holo-[ACP] + adenosine 3',5'-bisphosphate + H(+). Its function is as follows. Transfers the 4'-phosphopantetheine moiety from coenzyme A to a Ser of acyl-carrier-protein. This Erwinia tasmaniensis (strain DSM 17950 / CFBP 7177 / CIP 109463 / NCPPB 4357 / Et1/99) protein is Holo-[acyl-carrier-protein] synthase.